Here is an 89-residue protein sequence, read N- to C-terminus: Small ribosomal subunit protein uS17 (89 aa).

Belongs to the universal ribosomal protein uS17 family. In terms of assembly, part of the 30S ribosomal subunit.

Functionally, one of the primary rRNA binding proteins, it binds specifically to the 5'-end of 16S ribosomal RNA. In Baumannia cicadellinicola subsp. Homalodisca coagulata, this protein is Small ribosomal subunit protein uS17.